The sequence spans 882 residues: Alanine--tRNA ligase (882 aa).

Zn(2+)-binding residues include His-571, His-575, Cys-673, and His-677.

The protein belongs to the class-II aminoacyl-tRNA synthetase family. Zn(2+) is required as a cofactor.

It is found in the cytoplasm. It carries out the reaction tRNA(Ala) + L-alanine + ATP = L-alanyl-tRNA(Ala) + AMP + diphosphate. Catalyzes the attachment of alanine to tRNA(Ala) in a two-step reaction: alanine is first activated by ATP to form Ala-AMP and then transferred to the acceptor end of tRNA(Ala). Also edits incorrectly charged Ser-tRNA(Ala) and Gly-tRNA(Ala) via its editing domain. This Desulfotalea psychrophila (strain LSv54 / DSM 12343) protein is Alanine--tRNA ligase.